The following is a 240-amino-acid chain: Phosphatidylserine decarboxylase proenzyme (240 aa).

S205 (schiff-base intermediate with substrate; via pyruvic acid) is an active-site residue. At S205 the chain carries Pyruvic acid (Ser); by autocatalysis.

The protein belongs to the phosphatidylserine decarboxylase family. PSD-A subfamily. As to quaternary structure, heterodimer of a large membrane-associated beta subunit and a small pyruvoyl-containing alpha subunit. The cofactor is pyruvate. Post-translationally, is synthesized initially as an inactive proenzyme. Formation of the active enzyme involves a self-maturation process in which the active site pyruvoyl group is generated from an internal serine residue via an autocatalytic post-translational modification. Two non-identical subunits are generated from the proenzyme in this reaction, and the pyruvate is formed at the N-terminus of the alpha chain, which is derived from the carboxyl end of the proenzyme. The post-translation cleavage follows an unusual pathway, termed non-hydrolytic serinolysis, in which the side chain hydroxyl group of the serine supplies its oxygen atom to form the C-terminus of the beta chain, while the remainder of the serine residue undergoes an oxidative deamination to produce ammonia and the pyruvoyl prosthetic group on the alpha chain.

It is found in the cell membrane. It carries out the reaction a 1,2-diacyl-sn-glycero-3-phospho-L-serine + H(+) = a 1,2-diacyl-sn-glycero-3-phosphoethanolamine + CO2. Its pathway is phospholipid metabolism; phosphatidylethanolamine biosynthesis; phosphatidylethanolamine from CDP-diacylglycerol: step 2/2. Catalyzes the formation of phosphatidylethanolamine (PtdEtn) from phosphatidylserine (PtdSer). This Rhodopirellula baltica (strain DSM 10527 / NCIMB 13988 / SH1) protein is Phosphatidylserine decarboxylase proenzyme.